Consider the following 234-residue polypeptide: Endonuclease V (234 aa).

Residues aspartate 42 and aspartate 108 each coordinate Mg(2+).

Belongs to the endonuclease V family. Requires Mg(2+) as cofactor.

Its subcellular location is the cytoplasm. It carries out the reaction Endonucleolytic cleavage at apurinic or apyrimidinic sites to products with a 5'-phosphate.. DNA repair enzyme involved in the repair of deaminated bases. Selectively cleaves double-stranded DNA at the second phosphodiester bond 3' to a deoxyinosine leaving behind the intact lesion on the nicked DNA. This Geotalea uraniireducens (strain Rf4) (Geobacter uraniireducens) protein is Endonuclease V.